The primary structure comprises 145 residues: UPF0763 protein WS1752 (145 aa).

Belongs to the UPF0763 family.

The chain is UPF0763 protein WS1752 from Wolinella succinogenes (strain ATCC 29543 / DSM 1740 / CCUG 13145 / JCM 31913 / LMG 7466 / NCTC 11488 / FDC 602W) (Vibrio succinogenes).